The sequence spans 100 residues: Co-chaperonin GroES (100 aa).

Belongs to the GroES chaperonin family. As to quaternary structure, heptamer of 7 subunits arranged in a ring. Interacts with the chaperonin GroEL.

Its subcellular location is the cytoplasm. Its function is as follows. Together with the chaperonin GroEL, plays an essential role in assisting protein folding. The GroEL-GroES system forms a nano-cage that allows encapsulation of the non-native substrate proteins and provides a physical environment optimized to promote and accelerate protein folding. GroES binds to the apical surface of the GroEL ring, thereby capping the opening of the GroEL channel. The sequence is that of Co-chaperonin GroES from Mycolicibacterium vanbaalenii (strain DSM 7251 / JCM 13017 / BCRC 16820 / KCTC 9966 / NRRL B-24157 / PYR-1) (Mycobacterium vanbaalenii).